A 196-amino-acid chain; its full sequence is ATP-dependent Clp protease proteolytic subunit (196 aa).

The active-site Nucleophile is the Ser99. Residue His124 is part of the active site.

The protein belongs to the peptidase S14 family. Fourteen ClpP subunits assemble into 2 heptameric rings which stack back to back to give a disk-like structure with a central cavity, resembling the structure of eukaryotic proteasomes.

The protein localises to the cytoplasm. It carries out the reaction Hydrolysis of proteins to small peptides in the presence of ATP and magnesium. alpha-casein is the usual test substrate. In the absence of ATP, only oligopeptides shorter than five residues are hydrolyzed (such as succinyl-Leu-Tyr-|-NHMec, and Leu-Tyr-Leu-|-Tyr-Trp, in which cleavage of the -Tyr-|-Leu- and -Tyr-|-Trp bonds also occurs).. Cleaves peptides in various proteins in a process that requires ATP hydrolysis. Has a chymotrypsin-like activity. Plays a major role in the degradation of misfolded proteins. This is ATP-dependent Clp protease proteolytic subunit from Campylobacter lari (strain RM2100 / D67 / ATCC BAA-1060).